We begin with the raw amino-acid sequence, 389 residues long: Shewanella-like protein phosphatase 1 (389 aa).

The transit peptide at 1–53 (MASLYLNSLLPLPPSHPQKLLEPSSSSLLSTSNGNELALKPIVINGDPPTFVS) directs the protein to the chloroplast. Mn(2+)-binding residues include aspartate 64, histidine 66, aspartate 102, and asparagine 137. Histidine 138 acts as the Proton donor in catalysis. Residues histidine 242 and histidine 314 each contribute to the Mn(2+) site.

This sequence belongs to the metallophosphoesterase superfamily. SLP family. The cofactor is Mn(2+). As to expression, expressed in rosettes leaves, shoots and flowers (at protein level).

The protein resides in the plastid. Its subcellular location is the chloroplast. Shows phosphatase activity, hydrolyzing the artificial substrate para-nitrophenylphosphate (pNPP) in vitro. This chain is Shewanella-like protein phosphatase 1, found in Arabidopsis thaliana (Mouse-ear cress).